A 92-amino-acid polypeptide reads, in one-letter code: Probable Fe(2+)-trafficking protein (92 aa).

The protein belongs to the Fe(2+)-trafficking protein family.

Could be a mediator in iron transactions between iron acquisition and iron-requiring processes, such as synthesis and/or repair of Fe-S clusters in biosynthetic enzymes. The chain is Probable Fe(2+)-trafficking protein from Shewanella woodyi (strain ATCC 51908 / MS32).